The primary structure comprises 208 residues: Large ribosomal subunit protein uL3 (208 aa).

The segment at 116–148 is disordered; the sequence is GFQGVIKRHGQSRGPMAHGSRYHRRPGSMGPVA.

This sequence belongs to the universal ribosomal protein uL3 family. Part of the 50S ribosomal subunit. Forms a cluster with proteins L14 and L19.

Functionally, one of the primary rRNA binding proteins, it binds directly near the 3'-end of the 23S rRNA, where it nucleates assembly of the 50S subunit. The chain is Large ribosomal subunit protein uL3 from Streptococcus pyogenes serotype M12 (strain MGAS2096).